The sequence spans 265 residues: Undecaprenyl-diphosphatase (265 aa).

The next 8 membrane-spanning stretches (helical) occupy residues 1–21, 39–59, 86–106, 112–132, 140–160, 186–206, 219–239, and 244–264; these read MDIL…FLPI, QGLA…ILYF, WCII…GNFI, SVSV…FADA, LAQM…LAMI, FSFL…GLKL, VGVL…LSFI, and MLPF…LVWF.

Belongs to the UppP family.

The protein localises to the cell inner membrane. It catalyses the reaction di-trans,octa-cis-undecaprenyl diphosphate + H2O = di-trans,octa-cis-undecaprenyl phosphate + phosphate + H(+). In terms of biological role, catalyzes the dephosphorylation of undecaprenyl diphosphate (UPP). Confers resistance to bacitracin. In Saccharophagus degradans (strain 2-40 / ATCC 43961 / DSM 17024), this protein is Undecaprenyl-diphosphatase.